The chain runs to 22 residues: Heat shock 70-related protein 1, mitochondrial (22 aa).

The protein belongs to the heat shock protein 70 family.

The protein resides in the mitochondrion. The chain is Heat shock 70-related protein 1, mitochondrial from Leishmania tarentolae (Sauroleishmania tarentolae).